Here is a 194-residue protein sequence, read N- to C-terminus: Protein GrpE 1 (194 aa).

A disordered region spans residues 1-22; the sequence is MIHNEEEQLEKKIEKNQDPKIN.

Belongs to the GrpE family. In terms of assembly, homodimer.

It localises to the cytoplasm. Functionally, participates actively in the response to hyperosmotic and heat shock by preventing the aggregation of stress-denatured proteins, in association with DnaK and GrpE. It is the nucleotide exchange factor for DnaK and may function as a thermosensor. Unfolded proteins bind initially to DnaJ; upon interaction with the DnaJ-bound protein, DnaK hydrolyzes its bound ATP, resulting in the formation of a stable complex. GrpE releases ADP from DnaK; ATP binding to DnaK triggers the release of the substrate protein, thus completing the reaction cycle. Several rounds of ATP-dependent interactions between DnaJ, DnaK and GrpE are required for fully efficient folding. This Buchnera aphidicola subsp. Acyrthosiphon pisum (strain APS) (Acyrthosiphon pisum symbiotic bacterium) protein is Protein GrpE 1.